The primary structure comprises 158 residues: 6,7-dimethyl-8-ribityllumazine synthase (158 aa).

5-amino-6-(D-ribitylamino)uracil is bound by residues phenylalanine 24, 58-60 (AFE), and 82-84 (AVI). 87–88 (GT) serves as a coordination point for (2S)-2-hydroxy-3-oxobutyl phosphate. Histidine 90 functions as the Proton donor in the catalytic mechanism. Phenylalanine 115 contributes to the 5-amino-6-(D-ribitylamino)uracil binding site. Arginine 129 is a binding site for (2S)-2-hydroxy-3-oxobutyl phosphate.

Belongs to the DMRL synthase family. In terms of assembly, forms an icosahedral capsid composed of 60 subunits, arranged as a dodecamer of pentamers.

The catalysed reaction is (2S)-2-hydroxy-3-oxobutyl phosphate + 5-amino-6-(D-ribitylamino)uracil = 6,7-dimethyl-8-(1-D-ribityl)lumazine + phosphate + 2 H2O + H(+). It participates in cofactor biosynthesis; riboflavin biosynthesis; riboflavin from 2-hydroxy-3-oxobutyl phosphate and 5-amino-6-(D-ribitylamino)uracil: step 1/2. Catalyzes the formation of 6,7-dimethyl-8-ribityllumazine by condensation of 5-amino-6-(D-ribitylamino)uracil with 3,4-dihydroxy-2-butanone 4-phosphate. This is the penultimate step in the biosynthesis of riboflavin. This Ectopseudomonas mendocina (strain ymp) (Pseudomonas mendocina) protein is 6,7-dimethyl-8-ribityllumazine synthase.